Consider the following 428-residue polypeptide: Serine--tRNA ligase (428 aa).

237-239 lines the L-serine pocket; it reads TAE. 268 to 270 serves as a coordination point for ATP; that stretch reads RSE. E291 contributes to the L-serine binding site. ATP is bound at residue 355–358; sequence EISS. S390 contributes to the L-serine binding site.

This sequence belongs to the class-II aminoacyl-tRNA synthetase family. Type-1 seryl-tRNA synthetase subfamily. Homodimer. The tRNA molecule binds across the dimer.

It is found in the cytoplasm. The enzyme catalyses tRNA(Ser) + L-serine + ATP = L-seryl-tRNA(Ser) + AMP + diphosphate + H(+). It catalyses the reaction tRNA(Sec) + L-serine + ATP = L-seryl-tRNA(Sec) + AMP + diphosphate + H(+). Its pathway is aminoacyl-tRNA biosynthesis; selenocysteinyl-tRNA(Sec) biosynthesis; L-seryl-tRNA(Sec) from L-serine and tRNA(Sec): step 1/1. Catalyzes the attachment of serine to tRNA(Ser). Is also able to aminoacylate tRNA(Sec) with serine, to form the misacylated tRNA L-seryl-tRNA(Sec), which will be further converted into selenocysteinyl-tRNA(Sec). The chain is Serine--tRNA ligase from Hydrogenovibrio crunogenus (strain DSM 25203 / XCL-2) (Thiomicrospira crunogena).